The primary structure comprises 133 residues: Histone H2A.1 (133 aa).

Residues 1–23 (MSTTGKGGKAKGKTASSKQVSRS) form a disordered region. An N-acetylserine modification is found at Ser2. N6-acetyllysine occurs at positions 6, 9, 11, 13, and 18. Phosphoserine is present on Ser123. Lys124 is covalently cross-linked (Glycyl lysine isopeptide (Lys-Gly) (interchain with G-Cter in ubiquitin)). Ser129 bears the Phosphoserine mark.

Belongs to the histone H2A family. As to quaternary structure, the nucleosome is a histone octamer containing two molecules each of H2A, H2B, H3 and H4 assembled in one H3-H4 heterotetramer and two H2A-H2B heterodimers. The octamer wraps approximately 147 bp of DNA. In terms of processing, monoubiquitination of Lys-124 gives a specific tag for epigenetic transcriptional repression. Post-translationally, acetylation occurs almost exclusively in the MAC.

The protein localises to the nucleus. Its subcellular location is the chromosome. Core component of nucleosome. Nucleosomes wrap and compact DNA into chromatin, limiting DNA accessibility to the cellular machineries which require DNA as a template. Histones thereby play a central role in transcription regulation, DNA repair, DNA replication and chromosomal stability. DNA accessibility is regulated via a complex set of post-translational modifications of histones, also called histone code, and nucleosome remodeling. The chain is Histone H2A.1 (HTA2) from Tetrahymena pyriformis.